Consider the following 180-residue polypeptide: CASP-like protein 2A3 (180 aa).

The Cytoplasmic segment spans residues 1 to 13; sequence MELIYGSTMRKKW. A helical membrane pass occupies residues 14-34; that stretch reads IEPALRFLPVGLCISALALML. At 35-55 the chain is on the extracellular side; it reads KSKEGNENGILEYKHVGAFRY. A helical transmembrane segment spans residues 56-76; it reads LAYANGICAAYSVLSTFNSVV. The Cytoplasmic segment spans residues 77–85; it reads PRSCSLSRA. The helical transmembrane segment at 86–106 threads the bilayer; it reads WFVFVFDQAFTYLMLGAGAVV. Residues 107–135 lie on the Extracellular side of the membrane; that stretch reads TEVLYLAYKGDEKITWFEICPYYGRFCNR. The chain crosses the membrane as a helical span at residues 136 to 156; that stretch reads VAASLVISFLALLCFIPLSLI. The Cytoplasmic portion of the chain corresponds to 157–180; it reads SAYRVFSKYDPPSLCKKDQITSQS.

This sequence belongs to the Casparian strip membrane proteins (CASP) family. In terms of assembly, homodimer and heterodimers.

The protein resides in the cell membrane. In Picea sitchensis (Sitka spruce), this protein is CASP-like protein 2A3.